Here is a 593-residue protein sequence, read N- to C-terminus: Capsid protein 1 (593 aa).

It belongs to the NCLDV major capsid protein family.

Its subcellular location is the virion. This is Capsid protein 1 from Acanthamoeba polyphaga mimivirus (APMV).